Consider the following 352-residue polypeptide: Holliday junction branch migration complex subunit RuvB (352 aa).

Positions 5-191 (TDDFSEQRVI…FGIVARLEFY (187 aa)) are large ATPase domain (RuvB-L). ATP-binding positions include leucine 30, arginine 31, glycine 72, lysine 75, threonine 76, threonine 77, 138–140 (EDY), arginine 181, tyrosine 191, and arginine 228. Threonine 76 contacts Mg(2+). The interval 192–262 (TPLELTRIVT…MADAALVMLD (71 aa)) is small ATPAse domain (RuvB-S). The interval 265-352 (PVGFDVMDRK…GPNGELWGGQ (88 aa)) is head domain (RuvB-H). Arginine 301, arginine 320, and arginine 325 together coordinate DNA.

It belongs to the RuvB family. Homohexamer. Forms an RuvA(8)-RuvB(12)-Holliday junction (HJ) complex. HJ DNA is sandwiched between 2 RuvA tetramers; dsDNA enters through RuvA and exits via RuvB. An RuvB hexamer assembles on each DNA strand where it exits the tetramer. Each RuvB hexamer is contacted by two RuvA subunits (via domain III) on 2 adjacent RuvB subunits; this complex drives branch migration. In the full resolvosome a probable DNA-RuvA(4)-RuvB(12)-RuvC(2) complex forms which resolves the HJ.

Its subcellular location is the cytoplasm. The enzyme catalyses ATP + H2O = ADP + phosphate + H(+). The RuvA-RuvB-RuvC complex processes Holliday junction (HJ) DNA during genetic recombination and DNA repair, while the RuvA-RuvB complex plays an important role in the rescue of blocked DNA replication forks via replication fork reversal (RFR). RuvA specifically binds to HJ cruciform DNA, conferring on it an open structure. The RuvB hexamer acts as an ATP-dependent pump, pulling dsDNA into and through the RuvAB complex. RuvB forms 2 homohexamers on either side of HJ DNA bound by 1 or 2 RuvA tetramers; 4 subunits per hexamer contact DNA at a time. Coordinated motions by a converter formed by DNA-disengaged RuvB subunits stimulates ATP hydrolysis and nucleotide exchange. Immobilization of the converter enables RuvB to convert the ATP-contained energy into a lever motion, pulling 2 nucleotides of DNA out of the RuvA tetramer per ATP hydrolyzed, thus driving DNA branch migration. The RuvB motors rotate together with the DNA substrate, which together with the progressing nucleotide cycle form the mechanistic basis for DNA recombination by continuous HJ branch migration. Branch migration allows RuvC to scan DNA until it finds its consensus sequence, where it cleaves and resolves cruciform DNA. This chain is Holliday junction branch migration complex subunit RuvB, found in Herminiimonas arsenicoxydans.